The sequence spans 100 residues: Small ribosomal subunit protein uS14c (100 aa).

Belongs to the universal ribosomal protein uS14 family. In terms of assembly, part of the 30S ribosomal subunit.

The protein localises to the plastid. Its subcellular location is the chloroplast. Its function is as follows. Binds 16S rRNA, required for the assembly of 30S particles. The chain is Small ribosomal subunit protein uS14c from Glycine max (Soybean).